The following is a 273-amino-acid chain: 4-hydroxy-tetrahydrodipicolinate reductase (273 aa).

NAD(+)-binding positions include 10–15 (GAGGRM), glutamate 36, 100–102 (GTT), and 124–127 (SGNM). The Proton donor/acceptor role is filled by histidine 157. Position 158 (histidine 158) interacts with (S)-2,3,4,5-tetrahydrodipicolinate. The active-site Proton donor is the lysine 161. Residue 167 to 168 (GT) participates in (S)-2,3,4,5-tetrahydrodipicolinate binding.

The protein belongs to the DapB family.

Its subcellular location is the cytoplasm. It carries out the reaction (S)-2,3,4,5-tetrahydrodipicolinate + NAD(+) + H2O = (2S,4S)-4-hydroxy-2,3,4,5-tetrahydrodipicolinate + NADH + H(+). The catalysed reaction is (S)-2,3,4,5-tetrahydrodipicolinate + NADP(+) + H2O = (2S,4S)-4-hydroxy-2,3,4,5-tetrahydrodipicolinate + NADPH + H(+). Its pathway is amino-acid biosynthesis; L-lysine biosynthesis via DAP pathway; (S)-tetrahydrodipicolinate from L-aspartate: step 4/4. Its function is as follows. Catalyzes the conversion of 4-hydroxy-tetrahydrodipicolinate (HTPA) to tetrahydrodipicolinate. This is 4-hydroxy-tetrahydrodipicolinate reductase from Rhodopseudomonas palustris (strain BisA53).